A 423-amino-acid chain; its full sequence is Cytochrome c biogenesis protein Ccs1 (423 aa).

A run of 3 helical transmembrane segments spans residues 11–31 (LKFAIALLLLISITITFGSII), 70–90 (NFWFISLLLSLGISLIACTFF), and 153–173 (IAPVFVHLSIILILLGSIFAS).

It belongs to the Ccs1/CcsB family. In terms of assembly, may interact with CcsA.

The protein localises to the plastid. Its subcellular location is the chloroplast thylakoid membrane. Required during biogenesis of c-type cytochromes (cytochrome c6 and cytochrome f) at the step of heme attachment. The protein is Cytochrome c biogenesis protein Ccs1 of Heterosigma akashiwo (strain NIES-293 / 8280G21-1).